We begin with the raw amino-acid sequence, 103 residues long: N(4)-acetylcytidine amidohydrolase (103 aa).

The ASCH domain occupies 6 to 94 (ITFFQRFQND…IAEIYPNQTQ (89 aa)). The active-site Proton acceptor is the lysine 21. Residue threonine 24 is the Nucleophile of the active site. The Proton donor role is filled by glutamate 74.

The protein belongs to the N(4)-acetylcytidine amidohydrolase family.

It catalyses the reaction N(4)-acetylcytidine + H2O = cytidine + acetate + H(+). The catalysed reaction is N(4)-acetyl-2'-deoxycytidine + H2O = 2'-deoxycytidine + acetate + H(+). The enzyme catalyses N(4)-acetylcytosine + H2O = cytosine + acetate + H(+). In terms of biological role, catalyzes the hydrolysis of N(4)-acetylcytidine (ac4C). This is N(4)-acetylcytidine amidohydrolase (yqfB) from Salmonella schwarzengrund (strain CVM19633).